We begin with the raw amino-acid sequence, 173 residues long: T-cell receptor beta-1 chain C region (173 aa).

Residues 1–146 (EDLRNVTPPK…GVLSATILYE (146 aa)) form a c region region. A disulfide bridge connects residues cysteine 31 and cysteine 71. 2 N-linked (GlcNAc...) asparagine glycosylation sites follow: asparagine 67 and asparagine 116. A helical transmembrane segment spans residues 146-167 (EILLGKATLYAVLVSTLVVMAM). Residues 168 to 173 (VKRKNS) are Cytoplasmic-facing.

The protein localises to the membrane. This chain is T-cell receptor beta-1 chain C region, found in Mus musculus (Mouse).